A 466-amino-acid chain; its full sequence is 3-isopropylmalate dehydratase large subunit 1 (466 aa).

Residues cysteine 347, cysteine 407, and cysteine 410 each coordinate [4Fe-4S] cluster.

It belongs to the aconitase/IPM isomerase family. LeuC type 1 subfamily. As to quaternary structure, heterodimer of LeuC and LeuD. The cofactor is [4Fe-4S] cluster.

It catalyses the reaction (2R,3S)-3-isopropylmalate = (2S)-2-isopropylmalate. It participates in amino-acid biosynthesis; L-leucine biosynthesis; L-leucine from 3-methyl-2-oxobutanoate: step 2/4. Functionally, catalyzes the isomerization between 2-isopropylmalate and 3-isopropylmalate, via the formation of 2-isopropylmaleate. The sequence is that of 3-isopropylmalate dehydratase large subunit 1 from Salmonella choleraesuis (strain SC-B67).